Consider the following 837-residue polypeptide: Translation initiation factor IF-2 (837 aa).

Disordered regions lie at residues 1-44 and 62-251; these read MTEK…VRKS and KAQE…TKPA. Composition is skewed to basic and acidic residues over residues 62-102 and 111-165; these read KAQE…EAKP and ADPE…HNDS. Residues 189–205 are compositionally biased toward basic residues; that stretch reads RENHIRTGKNKVTKAKK. Residues 206–229 are compositionally biased toward basic and acidic residues; it reads GGRDDNGSKDERSADRRNQKDMRG. The span at 242–251 shows a compositional bias: polar residues; that stretch reads TLQQAFTKPA. One can recognise a tr-type G domain in the interval 337–506; sequence QRAPVVTIMG…LLQSEVLELT (170 aa). The interval 346–353 is G1; that stretch reads GHVDHGKT. 346–353 is a GTP binding site; sequence GHVDHGKT. The tract at residues 371–375 is G2; it reads GITQH. Residues 392 to 395 form a G3 region; sequence DTPG. GTP is bound by residues 392–396 and 446–449; these read DTPGH and NKID. The interval 446 to 449 is G4; it reads NKID. Positions 482-484 are G5; sequence SAK.

This sequence belongs to the TRAFAC class translation factor GTPase superfamily. Classic translation factor GTPase family. IF-2 subfamily.

The protein localises to the cytoplasm. Its function is as follows. One of the essential components for the initiation of protein synthesis. Protects formylmethionyl-tRNA from spontaneous hydrolysis and promotes its binding to the 30S ribosomal subunits. Also involved in the hydrolysis of GTP during the formation of the 70S ribosomal complex. The protein is Translation initiation factor IF-2 of Actinobacillus succinogenes (strain ATCC 55618 / DSM 22257 / CCUG 43843 / 130Z).